Reading from the N-terminus, the 286-residue chain is Pyridoxal kinase PdxY (286 aa).

Substrate contacts are provided by residues serine 9 and 44–45 (TQ). ATP contacts are provided by residues aspartate 111, alanine 143, glutamate 148, lysine 181, and 208–211 (RPLV). Position 222 (aspartate 222) interacts with substrate.

This sequence belongs to the pyridoxine kinase family. PdxY subfamily. As to quaternary structure, homodimer. It depends on Mg(2+) as a cofactor.

It carries out the reaction pyridoxal + ATP = pyridoxal 5'-phosphate + ADP + H(+). It functions in the pathway cofactor metabolism; pyridoxal 5'-phosphate salvage; pyridoxal 5'-phosphate from pyridoxal: step 1/1. Pyridoxal kinase involved in the salvage pathway of pyridoxal 5'-phosphate (PLP). Catalyzes the phosphorylation of pyridoxal to PLP. This Pectobacterium atrosepticum (strain SCRI 1043 / ATCC BAA-672) (Erwinia carotovora subsp. atroseptica) protein is Pyridoxal kinase PdxY.